We begin with the raw amino-acid sequence, 404 residues long: Glucose-1-phosphate adenylyltransferase (404 aa).

Residues Tyr99, Gly164, 179 to 180 (EK), and Ser197 each bind alpha-D-glucose 1-phosphate.

This sequence belongs to the bacterial/plant glucose-1-phosphate adenylyltransferase family.

The catalysed reaction is alpha-D-glucose 1-phosphate + ATP + H(+) = ADP-alpha-D-glucose + diphosphate. It participates in capsule biogenesis; capsule polysaccharide biosynthesis. Its pathway is glycan biosynthesis; glycogen biosynthesis. Its function is as follows. Involved in the biosynthesis of ADP-glucose, a building block, required in the biosynthesis of maltose-1-phosphate (M1P) and in the elongation reactions to produce linear alpha-1,4-glucans. Catalyzes the reaction between ATP and alpha-D-glucose 1-phosphate (G1P) to produce pyrophosphate and ADP-Glc. The protein is Glucose-1-phosphate adenylyltransferase of Mycolicibacterium paratuberculosis (strain ATCC BAA-968 / K-10) (Mycobacterium paratuberculosis).